A 429-amino-acid polypeptide reads, in one-letter code: Adenylosuccinate synthetase (429 aa).

Residues 13–19 and 41–43 each bind GTP; these read GDEGKGK and GHT. Asp14 serves as the catalytic Proton acceptor. Mg(2+) contacts are provided by Asp14 and Gly41. IMP contacts are provided by residues 14 to 17, 39 to 42, Thr130, Arg144, Gln225, Thr240, and Arg304; these read DEGK and NAGH. Catalysis depends on His42, which acts as the Proton donor. 300–306 serves as a coordination point for substrate; that stretch reads ATTGRAR. Residues Arg306, 332–334, and 414–416 each bind GTP; these read KLD and STG.

This sequence belongs to the adenylosuccinate synthetase family. As to quaternary structure, homodimer. Mg(2+) serves as cofactor.

It localises to the cytoplasm. It carries out the reaction IMP + L-aspartate + GTP = N(6)-(1,2-dicarboxyethyl)-AMP + GDP + phosphate + 2 H(+). Its pathway is purine metabolism; AMP biosynthesis via de novo pathway; AMP from IMP: step 1/2. In terms of biological role, plays an important role in the de novo pathway of purine nucleotide biosynthesis. Catalyzes the first committed step in the biosynthesis of AMP from IMP. The polypeptide is Adenylosuccinate synthetase (Acidithiobacillus ferrooxidans (Thiobacillus ferrooxidans)).